We begin with the raw amino-acid sequence, 257 residues long: Short chain dehydrogenase ausX (257 aa).

Isoleucine 11, aspartate 57, arginine 119, tyrosine 151, lysine 155, and valine 184 together coordinate NADP(+). Residue tyrosine 151 is the Proton acceptor of the active site. Residue lysine 155 is the Lowers pKa of active site Tyr of the active site.

It belongs to the short-chain dehydrogenases/reductases (SDR) family.

Its pathway is secondary metabolite biosynthesis; terpenoid biosynthesis. Short chain dehydrogenase; part of the gene cluster that mediates the biosynthesis of calidodehydroaustin, a fungal meroterpenoid. The first step of the pathway is the synthesis of 3,5-dimethylorsellinic acid by the polyketide synthase ausA. 3,5-dimethylorsellinic acid is then prenylated by the polyprenyl transferase ausN. Further epoxidation by the FAD-dependent monooxygenase ausM and cyclization by the probable terpene cyclase ausL lead to the formation of protoaustinoid A. Protoaustinoid A is then oxidized to spiro-lactone preaustinoid A3 by the combined action of the FAD-binding monooxygenases ausB and ausC, and the dioxygenase ausE. Acid-catalyzed keto-rearrangement and ring contraction of the tetraketide portion of preaustinoid A3 by ausJ lead to the formation of preaustinoid A4. The aldo-keto reductase ausK, with the help of ausH, is involved in the next step by transforming preaustinoid A4 into isoaustinone which is in turn hydroxylated by the P450 monooxygenase ausI to form austinolide. The cytochrome P450 monooxygenase ausG modifies austinolide to austinol. Austinol is further acetylated to austin by the O-acetyltransferase ausP, which spontaneously changes to dehydroaustin. The cytochrome P450 monooxygenase ausR then converts dehydroaustin is into 7-dehydrodehydroaustin. The hydroxylation catalyzed by ausR permits the O-acetyltransferase ausQ to add an additional acetyl group to the molecule, leading to the formation of acetoxydehydroaustin. The short chain dehydrogenase ausT catalyzes the reduction of the double bond present between carbon atoms 1 and 2 to convert 7-dehydrodehydroaustin into 1,2-dihydro-7-hydroxydehydroaustin. AusQ catalyzes not only an acetylation reaction but also the addition of the PKS ausV diketide product to 1,2-dihydro-7-hydroxydehydroaustin, forming precalidodehydroaustin. Finally, the iron/alpha-ketoglutarate-dependent dioxygenase converts precalidodehydroaustin into calidodehydroaustin. In Aspergillus calidoustus, this protein is Short chain dehydrogenase ausX.